The chain runs to 134 residues: ATP synthase epsilon chain, chloroplastic (134 aa).

Belongs to the ATPase epsilon chain family. As to quaternary structure, F-type ATPases have 2 components, CF(1) - the catalytic core - and CF(0) - the membrane proton channel. CF(1) has five subunits: alpha(3), beta(3), gamma(1), delta(1), epsilon(1). CF(0) has three main subunits: a, b and c.

The protein resides in the plastid. The protein localises to the chloroplast thylakoid membrane. Produces ATP from ADP in the presence of a proton gradient across the membrane. The chain is ATP synthase epsilon chain, chloroplastic from Nymphaea alba (White water-lily).